We begin with the raw amino-acid sequence, 504 residues long: ATP synthase subunit alpha (504 aa).

169 to 176 (GDRQIGKT) contacts ATP.

This sequence belongs to the ATPase alpha/beta chains family. In terms of assembly, F-type ATPases have 2 components, CF(1) - the catalytic core - and CF(0) - the membrane proton channel. CF(1) has five subunits: alpha(3), beta(3), gamma(1), delta(1), epsilon(1). CF(0) has three main subunits: a(1), b(2) and c(9-12). The alpha and beta chains form an alternating ring which encloses part of the gamma chain. CF(1) is attached to CF(0) by a central stalk formed by the gamma and epsilon chains, while a peripheral stalk is formed by the delta and b chains.

Its subcellular location is the cell membrane. It catalyses the reaction ATP + H2O + 4 H(+)(in) = ADP + phosphate + 5 H(+)(out). In terms of biological role, produces ATP from ADP in the presence of a proton gradient across the membrane. The alpha chain is a regulatory subunit. The sequence is that of ATP synthase subunit alpha from Syntrophomonas wolfei subsp. wolfei (strain DSM 2245B / Goettingen).